A 242-amino-acid chain; its full sequence is Uridylate kinase (242 aa).

Position 16–19 (16–19 (KISG)) interacts with ATP. Residues 24–29 (GDQGFG) are involved in allosteric activation by GTP. Position 58 (Gly-58) interacts with UMP. ATP is bound by residues Gly-59 and Arg-63. Residues Asp-78 and 139-146 (TGNPYFTT) each bind UMP. ATP contacts are provided by Thr-166, Tyr-172, and Asp-175.

Belongs to the UMP kinase family. As to quaternary structure, homohexamer.

Its subcellular location is the cytoplasm. The enzyme catalyses UMP + ATP = UDP + ADP. It functions in the pathway pyrimidine metabolism; CTP biosynthesis via de novo pathway; UDP from UMP (UMPK route): step 1/1. Its activity is regulated as follows. Allosterically activated by GTP. Inhibited by UTP. In terms of biological role, catalyzes the reversible phosphorylation of UMP to UDP. The chain is Uridylate kinase from Roseobacter denitrificans (strain ATCC 33942 / OCh 114) (Erythrobacter sp. (strain OCh 114)).